Here is a 244-residue protein sequence, read N- to C-terminus: Type III pantothenate kinase (244 aa).

ATP is bound at residue 9 to 16 (DAGNSSLK). Residues Tyr-90 and 97–100 (GVDR) contribute to the substrate site. Residue Asp-99 is the Proton acceptor of the active site. Thr-122 contributes to the ATP binding site. Residue Thr-172 coordinates substrate.

Belongs to the type III pantothenate kinase family. In terms of assembly, homodimer. The cofactor is NH4(+). K(+) serves as cofactor.

Its subcellular location is the cytoplasm. The enzyme catalyses (R)-pantothenate + ATP = (R)-4'-phosphopantothenate + ADP + H(+). It functions in the pathway cofactor biosynthesis; coenzyme A biosynthesis; CoA from (R)-pantothenate: step 1/5. Catalyzes the phosphorylation of pantothenate (Pan), the first step in CoA biosynthesis. The polypeptide is Type III pantothenate kinase (Thiobacillus denitrificans (strain ATCC 25259 / T1)).